A 469-amino-acid chain; its full sequence is DNA-binding transcriptional regulator NtrC (469 aa).

The region spanning 5–119 (IVWVVDDDSS…EAVALVERAI (115 aa)) is the Response regulatory domain. Position 54 is a 4-aspartylphosphate (Asp54). A Sigma-54 factor interaction domain is found at 140–369 (IIGEAPAMQD…LENTCRWLTV (230 aa)). ATP contacts are provided by residues 168–175 (GESGTGKE) and 231–240 (ADGGTLFLDE). Positions 445 to 464 (KQEAARLLGWGRNTLTRKLK) form a DNA-binding region, H-T-H motif.

In terms of processing, phosphorylated and dephosphorylated by NtrB.

It localises to the cytoplasm. Member of the two-component regulatory system NtrB/NtrC, which controls expression of the nitrogen-regulated (ntr) genes in response to nitrogen limitation. Phosphorylated NtrC binds directly to DNA and stimulates the formation of open promoter-sigma54-RNA polymerase complexes. This Escherichia coli O157:H7 protein is DNA-binding transcriptional regulator NtrC (glnG).